The chain runs to 425 residues: Glutamate-1-semialdehyde 2,1-aminomutase (425 aa).

Lys265 bears the N6-(pyridoxal phosphate)lysine mark.

The protein belongs to the class-III pyridoxal-phosphate-dependent aminotransferase family. HemL subfamily. In terms of assembly, homodimer. The cofactor is pyridoxal 5'-phosphate.

Its subcellular location is the cytoplasm. It catalyses the reaction (S)-4-amino-5-oxopentanoate = 5-aminolevulinate. It participates in porphyrin-containing compound metabolism; protoporphyrin-IX biosynthesis; 5-aminolevulinate from L-glutamyl-tRNA(Glu): step 2/2. This is Glutamate-1-semialdehyde 2,1-aminomutase from Chromobacterium violaceum (strain ATCC 12472 / DSM 30191 / JCM 1249 / CCUG 213 / NBRC 12614 / NCIMB 9131 / NCTC 9757 / MK).